Reading from the N-terminus, the 547-residue chain is MPSPLPVSFLLFLTLVGGRPQKSLLVEVEEGGNVVLPCLPDSSPVSSEKLAWYRGNQSTPFLELSPGSPGLGLHVGSLGILLVIVNVSDHMGGFYLCQKRPPFKDIWQPAWTVNVEDSGEMFRWNASDVRDLDCDLRNRSSGSHRSTSGSQLYVWAKDHPKVWGTKPVCAPRGSSLNQSLINQDLTVAPGSTLWLSCGVPPVPVAKGSISWTHVHPRRPNVSLLSLSLGGEHPVREMWVWGSLLLLPQATALDEGTYYCLRGNLTIERHVKVIARSAVWLWLLRTGGWIVPVVTLVYVIFCMVSLVAFLYCQRAFILRRKRKRMTDPARRFFKVTPPSGNGTQNQYGNVLSLPTSTSGQAHAQRWAAGLGSVPGSYGNPRIQVQDTGAQSHETGLEEEGEAYEEPDSEEGSEFYENDSNLGQDQVSQDGSGYENPEDEPMGPEEEDSFSNAESYENADEELAQPVGRMMDFLSPHGSAWDPSREASSLGSQSYEDMRGILYAAPQLHSIQSGPSHEEDADSYENMDKSDDLEPAWEGEGHMGTWGTT.

The first 16 residues, 1-16 (MPSPLPVSFLLFLTLV), serve as a signal peptide directing secretion. The propeptide occupies 17-18 (GG). The Extracellular portion of the chain corresponds to 19–287 (RPQKSLLVEV…VWLWLLRTGG (269 aa)). Positions 20 to 113 (PQKSLLVEVE…KDIWQPAWTV (94 aa)) constitute an Ig-like C2-type 1 domain. 3 disulfide bridges follow: Cys38–Cys259, Cys97–Cys197, and Cys134–Cys169. Residues Asn56, Asn86, Asn125, Asn138, Asn177, and Asn220 are each glycosylated (N-linked (GlcNAc...) asparagine). Residues 171–271 (PRGSSLNQSL…GNLTIERHVK (101 aa)) enclose the Ig-like C2-type 2 domain. Position 225 is a phosphoserine (Ser225). Asn263 is a glycosylation site (N-linked (GlcNAc...) asparagine). The chain crosses the membrane as a helical span at residues 288-311 (WIVPVVTLVYVIFCMVSLVAFLYC). The Cytoplasmic segment spans residues 312–547 (QRAFILRRKR…EGHMGTWGTT (236 aa)). Disordered regions lie at residues 330–355 (RFFKVTPPSGNGTQNQYGNVLSLPTS), 376–461 (YGNP…DEEL), and 472–491 (LSPHGSAWDPSREASSLGSQ). Positions 337-355 (PSGNGTQNQYGNVLSLPTS) are enriched in polar residues. A phosphotyrosine mark is found at Tyr346, Tyr376, and Tyr402. Residues 395–415 (LEEEGEAYEEPDSEEGSEFYE) are compositionally biased toward acidic residues. Positions 416-429 (NDSNLGQDQVSQDG) are enriched in polar residues. Phosphotyrosine is present on Tyr432. Acidic residues predominate over residues 434-447 (NPEDEPMGPEEEDS). A phosphotyrosine mark is found at Tyr493 and Tyr522. Residues 505-547 (QLHSIQSGPSHEEDADSYENMDKSDDLEPAWEGEGHMGTWGTT) are disordered.

Interacts with CR2/CD21. Part of a complex composed of CD19, CR2/CD21, CD81 and IFITM1/CD225 in the membrane of mature B-cells. Interacts directly with CD81 (via the second extracellular domain); this interaction is initiated early during biosynthesis in the ER/pre-Golgi compartments and is essential for trafficking and compartmentalization of CD19 receptor on the cell surface of when phosphorylated on Tyr-346 and/or Tyr-376. Interacts with PLCG2 when phosphorylated on Tyr-402. Interacts with LYN. Interacts (when tyrosine phosphorylated) with the regulatory p85 subunit of phosphatidylinositol 3-kinase (PIK3R1 or PIK3R2). Interacts with GRB2. In terms of processing, phosphorylated on tyrosine following B-cell activation. Phosphorylated on tyrosine residues by LYN. Tyrosine residues are phosphorylated sequentially after activation of the B cell receptor. Phosphorylation of Tyr-522 is extremely rapid, followed by phosphorylation at Tyr-402. In contrast, phosphorylation of Tyr-493 appears more slowly and is more transient, returning rapidly to basal levels. In terms of tissue distribution, detected on B cells in spleen, bone marrow, thymus and lymph nodes. Detected on peripheral blood lymphocytes (at protein level).

The protein localises to the cell membrane. It localises to the membrane raft. In terms of biological role, functions as a coreceptor for the B-cell antigen receptor complex (BCR) on B-lymphocytes. Decreases the threshold for activation of downstream signaling pathways and for triggering B-cell responses to antigens. Activates signaling pathways that lead to the activation of phosphatidylinositol 3-kinase and the mobilization of intracellular Ca(2+) stores. Is not required for early steps during B cell differentiation in the blood marrow. Required for normal differentiation of B-1 cells. Required for normal B cell differentiation and proliferation in response to antigen challenges. Required for normal levels of serum immunoglobulins, and for production of high-affinity antibodies in response to antigen challenge. This chain is B-lymphocyte antigen CD19 (Cd19), found in Mus musculus (Mouse).